The primary structure comprises 330 residues: Anthranilate phosphoribosyltransferase (330 aa).

Residues Gly-77, Gly-80–Asp-81, Thr-85, Asn-87–Thr-90, Lys-105–Ser-113, and Ser-117 each bind 5-phospho-alpha-D-ribose 1-diphosphate. Gly-77 contributes to the anthranilate binding site. Residue Ser-89 coordinates Mg(2+). Asn-108 contributes to the anthranilate binding site. Residue Arg-163 coordinates anthranilate. Mg(2+)-binding residues include Asp-222 and Glu-223.

This sequence belongs to the anthranilate phosphoribosyltransferase family. As to quaternary structure, homodimer. The cofactor is Mg(2+).

The catalysed reaction is N-(5-phospho-beta-D-ribosyl)anthranilate + diphosphate = 5-phospho-alpha-D-ribose 1-diphosphate + anthranilate. It participates in amino-acid biosynthesis; L-tryptophan biosynthesis; L-tryptophan from chorismate: step 2/5. Its function is as follows. Catalyzes the transfer of the phosphoribosyl group of 5-phosphorylribose-1-pyrophosphate (PRPP) to anthranilate to yield N-(5'-phosphoribosyl)-anthranilate (PRA). This Pelagibacter ubique (strain HTCC1062) protein is Anthranilate phosphoribosyltransferase.